Here is a 303-residue protein sequence, read N- to C-terminus: Taste receptor type 2 member 13 (303 aa).

At 1 to 7 the chain is on the extracellular side; that stretch reads MESALPS. The helical transmembrane segment at 8–28 threads the bilayer; it reads ILTLVIIAEFIIGNLSNGFIV. Residues 29 to 55 are Cytoplasmic-facing; that stretch reads LINYIDWVSKRELSSVDKLLIILAISR. A helical transmembrane segment spans residues 56 to 76; it reads IGLIWEILVSWFLALHYLAIF. The Extracellular portion of the chain corresponds to 77-85; that stretch reads VSGTGLRIM. The chain crosses the membrane as a helical span at residues 86–106; sequence IFSWIVSNHFSLWLATILSIF. At 107-128 the chain is on the cytoplasmic side; that stretch reads YLLKIASFSSPAFLYLKWRVNK. A helical membrane pass occupies residues 129–149; the sequence is VILMILLGSLVFLFLNLIQIN. Topologically, residues 150 to 184 are extracellular; sequence IHIKDWLDRYEGNTTWNFSMSDFVTFSVSVKFTMT. N-linked (GlcNAc...) asparagine glycans are attached at residues Asn-162 and Asn-166. Residues 185-205 form a helical membrane-spanning segment; it reads MFSLTPFTVALISFSLLIFSL. Residues 206-232 are Cytoplasmic-facing; the sequence is QKHLQKMQLNYKGHREPRTKVHTNALK. The helical transmembrane segment at 233 to 253 threads the bilayer; the sequence is IVISFLLLYASFFLCILISWI. Topologically, residues 254 to 261 are extracellular; it reads SELYQNTA. The helical transmembrane segment at 262–282 threads the bilayer; the sequence is IYMLCETIGLFYPSSHSFLLI. Over 283 to 303 the chain is Cytoplasmic; the sequence is LGNPKLRQAFLLVAAKVWAKR.

The protein belongs to the G-protein coupled receptor T2R family.

Its subcellular location is the membrane. Its function is as follows. Receptor that may play a role in the perception of bitterness and is gustducin-linked. May play a role in sensing the chemical composition of the gastrointestinal content. The activity of this receptor may stimulate alpha gustducin, mediate PLC-beta-2 activation and lead to the gating of TRPM5. The protein is Taste receptor type 2 member 13 (TAS2R13) of Pongo pygmaeus (Bornean orangutan).